A 381-amino-acid chain; its full sequence is UDP-4-amino-4-deoxy-L-arabinose--oxoglutarate aminotransferase (381 aa).

An N6-(pyridoxal phosphate)lysine modification is found at K182.

The protein belongs to the DegT/DnrJ/EryC1 family. ArnB subfamily. Homodimer. The cofactor is pyridoxal 5'-phosphate.

The enzyme catalyses UDP-4-amino-4-deoxy-beta-L-arabinose + 2-oxoglutarate = UDP-beta-L-threo-pentopyranos-4-ulose + L-glutamate. The protein operates within nucleotide-sugar biosynthesis; UDP-4-deoxy-4-formamido-beta-L-arabinose biosynthesis; UDP-4-deoxy-4-formamido-beta-L-arabinose from UDP-alpha-D-glucuronate: step 2/3. Its pathway is bacterial outer membrane biogenesis; lipopolysaccharide biosynthesis. Catalyzes the conversion of UDP-4-keto-arabinose (UDP-Ara4O) to UDP-4-amino-4-deoxy-L-arabinose (UDP-L-Ara4N). The modified arabinose is attached to lipid A and is required for resistance to polymyxin and cationic antimicrobial peptides. The protein is UDP-4-amino-4-deoxy-L-arabinose--oxoglutarate aminotransferase of Edwardsiella ictaluri (strain 93-146).